The primary structure comprises 345 residues: Phosphoribosylformylglycinamidine cyclo-ligase (345 aa).

Belongs to the AIR synthase family.

It localises to the cytoplasm. It catalyses the reaction 2-formamido-N(1)-(5-O-phospho-beta-D-ribosyl)acetamidine + ATP = 5-amino-1-(5-phospho-beta-D-ribosyl)imidazole + ADP + phosphate + H(+). The protein operates within purine metabolism; IMP biosynthesis via de novo pathway; 5-amino-1-(5-phospho-D-ribosyl)imidazole from N(2)-formyl-N(1)-(5-phospho-D-ribosyl)glycinamide: step 2/2. The sequence is that of Phosphoribosylformylglycinamidine cyclo-ligase from Myxococcus xanthus (strain DK1622).